The following is a 505-amino-acid chain: Putative heat shock protein HSP 90-beta 4 (505 aa).

Asn22, Lys83, and Phe109 together coordinate ATP. Positions 197-248 (EKEISDDEEEKGEKEEEDKDDKEKPKTEDVGSDEEDDTDKNNKKKTKKIKEK) are disordered. Residues 200–216 (ISDDEEEKGEKEEEDKD) show a composition bias toward acidic residues.

This sequence belongs to the heat shock protein 90 family. In terms of assembly, homodimer.

It is found in the cytoplasm. Its function is as follows. Putative molecular chaperone that may promote the maturation, structural maintenance and proper regulation of specific target proteins. The polypeptide is Putative heat shock protein HSP 90-beta 4 (HSP90AB4P) (Homo sapiens (Human)).